The chain runs to 91 residues: Large ribosomal subunit protein bL27 (91 aa).

This sequence belongs to the bacterial ribosomal protein bL27 family.

This chain is Large ribosomal subunit protein bL27, found in Deinococcus deserti (strain DSM 17065 / CIP 109153 / LMG 22923 / VCD115).